Consider the following 628-residue polypeptide: 1-deoxy-D-xylulose-5-phosphate synthase (628 aa).

Residues His77 and Gly118–Ser120 each bind thiamine diphosphate. Position 150 (Asp150) interacts with Mg(2+). Thiamine diphosphate is bound by residues Gly151–Ala152, Asn180, Tyr288, and Glu369. Residue Asn180 participates in Mg(2+) binding.

The protein belongs to the transketolase family. DXPS subfamily. As to quaternary structure, homodimer. Requires Mg(2+) as cofactor. It depends on thiamine diphosphate as a cofactor.

It catalyses the reaction D-glyceraldehyde 3-phosphate + pyruvate + H(+) = 1-deoxy-D-xylulose 5-phosphate + CO2. It functions in the pathway metabolic intermediate biosynthesis; 1-deoxy-D-xylulose 5-phosphate biosynthesis; 1-deoxy-D-xylulose 5-phosphate from D-glyceraldehyde 3-phosphate and pyruvate: step 1/1. In terms of biological role, catalyzes the acyloin condensation reaction between C atoms 2 and 3 of pyruvate and glyceraldehyde 3-phosphate to yield 1-deoxy-D-xylulose-5-phosphate (DXP). The chain is 1-deoxy-D-xylulose-5-phosphate synthase from Aquifex aeolicus (strain VF5).